The sequence spans 539 residues: Propionyl-CoA carboxylase beta chain, mitochondrial (539 aa).

A mitochondrion-targeting transit peptide spans 1-28 (MAAALRVAAVGARLSVLASGLRAAVRSL). One can recognise a CoA carboxyltransferase N-terminal domain in the interval 32–290 (ATSVNERIEN…SSQDPAPVRE (259 aa)). The tract at residues 32–533 (ATSVNERIEN…SKKVQRPWRK (502 aa)) is carboxyltransferase. Ser71 carries the post-translational modification Phosphoserine. N6-acetyllysine; alternate is present on Lys99. Position 99 is an N6-succinyllysine; alternate (Lys99). Lys248 bears the N6-succinyllysine mark. Residues 294-533 (PSDRLVPELD…SKKVQRPWRK (240 aa)) form the CoA carboxyltransferase C-terminal domain. Residues 325-358 (DEREFFEIMPNYAKNIIVGFARMNGRTVGIVGNQ) are acyl-CoA binding. N6-acetyllysine; alternate is present on residues Lys474 and Lys489. N6-succinyllysine; alternate occurs at positions 474 and 489.

The protein belongs to the AccD/PCCB family. The holoenzyme is a dodecamer composed of 6 PCCA/alpha subunits and 6 PCCB/beta subunits.

Its subcellular location is the mitochondrion matrix. The enzyme catalyses propanoyl-CoA + hydrogencarbonate + ATP = (S)-methylmalonyl-CoA + ADP + phosphate + H(+). It catalyses the reaction butanoyl-CoA + hydrogencarbonate + ATP = (2S)-ethylmalonyl-CoA + ADP + phosphate + H(+). The protein operates within metabolic intermediate metabolism; propanoyl-CoA degradation; succinyl-CoA from propanoyl-CoA: step 1/3. This is one of the 2 subunits of the biotin-dependent propionyl-CoA carboxylase (PCC), a mitochondrial enzyme involved in the catabolism of odd chain fatty acids, branched-chain amino acids isoleucine, threonine, methionine, and valine and other metabolites. Propionyl-CoA carboxylase catalyzes the carboxylation of propionyl-CoA/propanoyl-CoA to D-methylmalonyl-CoA/(S)-methylmalonyl-CoA. Within the holoenzyme, the alpha subunit catalyzes the ATP-dependent carboxylation of the biotin carried by the biotin carboxyl carrier (BCC) domain, while the beta subunit then transfers the carboxyl group from carboxylated biotin to propionyl-CoA. Propionyl-CoA carboxylase also significantly acts on butyryl-CoA/butanoyl-CoA, which is converted to ethylmalonyl-CoA/(2S)-ethylmalonyl-CoA at a much lower rate. Other alternative minor substrates include (2E)-butenoyl-CoA/crotonoyl-CoA. This chain is Propionyl-CoA carboxylase beta chain, mitochondrial, found in Homo sapiens (Human).